A 234-amino-acid polypeptide reads, in one-letter code: uncharacterized protein (234 aa).

3 consecutive transmembrane segments (helical) span residues 32–52 (GLRTNTLVAIGAALFVIVSVL), 62–82 (IPAQIVSGIGFLAGGVILKEG), and 106–126 (QGLFSEAVLGSMMVLVANIAL).

It belongs to the MgtC/SapB family.

The protein localises to the cell membrane. This is an uncharacterized protein from Synechocystis sp. (strain ATCC 27184 / PCC 6803 / Kazusa).